Consider the following 965-residue polypeptide: FKBP12-associated protein 1 (965 aa).

An RING-type; degenerate zinc finger spans residues 68-118 (CMICTVEMDYTCQMFACKRCYRVFDYGCIREWALKSTEKTVDRIWKCPNCY). 5 consecutive NF-X1-type zinc fingers follow at residues 159 to 177 (CMHG…ECTR), 216 to 235 (CSIH…PCPE), 362 to 382 (CGKH…PCLQ), 468 to 487 (CGIH…PCLE), and 586 to 606 (CYHT…VCKQ). Residues 733–796 (ERWCSQIEAI…MRSVFIKKED (64 aa)) enclose the R3H domain. Thr-951 is subject to Phosphothreonine. Ser-958 bears the Phosphoserine mark.

It belongs to the NFX1 family. As to quaternary structure, interacts with FPR1.

It localises to the cytoplasm. It is found in the nucleus. In terms of biological role, may play a role in transcription regulation. This chain is FKBP12-associated protein 1 (FAP1), found in Saccharomyces cerevisiae (strain ATCC 204508 / S288c) (Baker's yeast).